Reading from the N-terminus, the 378-residue chain is tRNA (guanine(26)-N(2))-dimethyltransferase (378 aa).

In terms of domain architecture, Trm1 methyltransferase spans 4–374; sequence KEVTEGKVRI…KEYEEITKCI (371 aa). S-adenosyl-L-methionine-binding residues include Arg44, Arg69, Asp87, Asp114, and Ala115. Cys246, Cys249, Cys263, and Cys266 together coordinate Zn(2+).

It belongs to the class I-like SAM-binding methyltransferase superfamily. Trm1 family.

The enzyme catalyses guanosine(26) in tRNA + 2 S-adenosyl-L-methionine = N(2)-dimethylguanosine(26) in tRNA + 2 S-adenosyl-L-homocysteine + 2 H(+). Functionally, dimethylates a single guanine residue at position 26 of a number of tRNAs using S-adenosyl-L-methionine as donor of the methyl groups. This Saccharolobus solfataricus (strain ATCC 35092 / DSM 1617 / JCM 11322 / P2) (Sulfolobus solfataricus) protein is tRNA (guanine(26)-N(2))-dimethyltransferase.